The chain runs to 284 residues: NADH-cytochrome b5 reductase 1 (284 aa).

The chain crosses the membrane as a helical span at residues 8 to 28 (PLVIFSTLAAIILAAVAVYVV). The FAD-binding FR-type domain maps to 41–144 (DVFQKFPLIE…RGPKGFFTYT (104 aa)). Residues 124 to 139 (DSKS…GPKG) and 150 to 182 (HLGM…KISL) contribute to the FAD site.

This sequence belongs to the flavoprotein pyridine nucleotide cytochrome reductase family. Monomer. Component of the 2-(3-amino-3-carboxypropyl)histidine synthase complex composed of DPH1, DPH2, DPH3 and a NADH-dependent reductase, predominantly CBR1. It depends on FAD as a cofactor.

It is found in the mitochondrion outer membrane. It catalyses the reaction 2 Fe(III)-[cytochrome b5] + NADH = 2 Fe(II)-[cytochrome b5] + NAD(+) + H(+). It carries out the reaction 2 Fe(3+)-[Dph3] + NADH = 2 Fe(2+)-[Dph3] + NAD(+) + H(+). The protein operates within protein modification; peptidyl-diphthamide biosynthesis. Functionally, NADH-dependent reductase for DPH3 and cytochrome b5. Required for the first step of diphthamide biosynthesis, a post-translational modification of histidine which occurs in elongation factor 2. DPH1 and DPH2 transfer a 3-amino-3-carboxypropyl (ACP) group from S-adenosyl-L-methionine (SAM) to a histidine residue, the reaction is assisted by a reduction system comprising DPH3 and a NADH-dependent reductase, predominantly CBR1. By reducing DPH3, also involved in the formation of the tRNA wobble base modification mcm5s 2U (5-methoxycarbonylmethyl-2-thiouridine), mediated by the elongator complex. The cytochrome b5/NADH cytochrome b5 reductase electron transfer system supports the catalytic activity of several sterol biosynthetic enzymes. This Meyerozyma guilliermondii (strain ATCC 6260 / CBS 566 / DSM 6381 / JCM 1539 / NBRC 10279 / NRRL Y-324) (Yeast) protein is NADH-cytochrome b5 reductase 1 (CBR1).